The following is a 172-amino-acid chain: Small ribosomal subunit protein uS5 (172 aa).

The S5 DRBM domain maps to Tyr-15–Val-78.

Belongs to the universal ribosomal protein uS5 family. Part of the 30S ribosomal subunit. Contacts proteins S4 and S8.

Its function is as follows. With S4 and S12 plays an important role in translational accuracy. Functionally, located at the back of the 30S subunit body where it stabilizes the conformation of the head with respect to the body. The sequence is that of Small ribosomal subunit protein uS5 from Ruthia magnifica subsp. Calyptogena magnifica.